Reading from the N-terminus, the 133-residue chain is Ubiquitin-like FUBI-ribosomal protein eS30 fusion protein (133 aa).

The Ubiquitin-like domain occupies 1-74 (MQLFVRAQEL…LEVAGRMLGG (74 aa)). Lys-125 carries the N6-succinyllysine modification.

This sequence in the N-terminal section; belongs to the ubiquitin family. In the C-terminal section; belongs to the eukaryotic ribosomal protein eS30 family. Component of the 40S subunit of the ribosome. FUBI is cleaved from ribosomal protein S30 by the deubiquitinase USP36 before the assembly of ribosomal protein S30 into pre-40S ribosomal particles. FUBI removal from ribosomal protein S30 is a crucial event for the final maturation of pre-40S particles.

The protein resides in the cytoplasm. Its subcellular location is the nucleus. Its function is as follows. May have pro-apoptotic activity. Component of the 40S subunit of the ribosome. Contributes to the assembly and function of 40S ribosomal subunits. The polypeptide is Ubiquitin-like FUBI-ribosomal protein eS30 fusion protein (FAU) (Oryctolagus cuniculus (Rabbit)).